A 515-amino-acid polypeptide reads, in one-letter code: Thioredoxin domain-containing protein 2 (515 aa).

The interval 1–23 is disordered; the sequence is MTLNNGGKANERGSNENPLQALS. 2 positions are modified to phosphoserine: S14 and S39. The segment at 51–390 is disordered; sequence TLHMSTEESE…NTIKSSEEDV (340 aa). 2 stretches are compositionally biased toward polar residues: residues 61-75 and 85-136; these read FPQQVSSTPMFSENT and KPSS…TNST. 21 tandem repeats follow at residues 92 to 106, 107 to 121, 122 to 136, 137 to 151, 152 to 166, 167 to 181, 182 to 196, 197 to 211, 212 to 226, 227 to 241, 242 to 256, 257 to 271, 272 to 286, 287 to 301, 302 to 316, 317 to 331, 332 to 346, 347 to 362, 363 to 375, 376 to 390, and 391 to 405. The interval 92 to 405 is 21 X 15 AA approximate tandem repeat of Q-P-K-X-G-D-I-P-K-S-[PS]-E-[KE]-X-I; that stretch reads QLKQENISKS…KLLGLGAEIE (314 aa). 2 stretches are compositionally biased toward basic and acidic residues: residues 137 to 293 and 302 to 358; these read HYRE…ETKV and QSKE…KSPE. The residue at position 146 (S146) is a Phosphoserine. Over residues 375–384 the composition is skewed to polar residues; that stretch reads IQSQEGNTIK. Residues 398 to 515 form the Thioredoxin domain; that stretch reads LGLGAEIETL…KLERSISELK (118 aa). A disulfide bridge links C442 with C445.

Testis-specific. Strongly expressed in the testicular seminiferous tubules, mostly in the round spermatids.

It localises to the cytoplasm. Functionally, probably plays a regulatory role in sperm development. May participate in regulation of fibrous sheath (FS) assembly by supporting the formation of disulfide bonds during sperm tail morphogenesis. May also be required to rectify incorrect disulfide pairing and generate suitable pairs between the FS constituents. Can reduce disulfide bonds in vitro in the presence of NADP and thioredoxin reductase. The chain is Thioredoxin domain-containing protein 2 (Txndc2) from Mus musculus (Mouse).